Here is a 68-residue protein sequence, read N- to C-terminus: U19-ctenitoxin-Pn1a (68 aa).

A Pyrrolidone carboxylic acid modification is found at Gln-1. Disulfide bonds link Cys-8–Cys-19, Cys-13–Cys-28, Cys-18–Cys-51, Cys-38–Cys-59, and Cys-53–Cys-65.

Expressed by the venom gland.

Its subcellular location is the secreted. Non-toxic to mice and insects. This chain is U19-ctenitoxin-Pn1a, found in Phoneutria nigriventer (Brazilian armed spider).